A 166-amino-acid polypeptide reads, in one-letter code: S-phase kinase-associated protein 1 homolog (166 aa).

Positions 105–166 (ILAANYLDIK…ENKWAEEATS (62 aa)) are interaction with the F-box domain of F-box proteins.

Belongs to the SKP1 family. Component of multiple SCF (SKP1-CUL1-F-box) E3 ubiquitin-protein ligase complexes formed of CUL1, SKP1, RBX1 and a variable F-box domain-containing protein as substrate-specific subunit.

It participates in protein modification; protein ubiquitination. Its function is as follows. Essential component of the SCF (SKP1-CUL1-F-box protein) ubiquitin ligase complex, which mediates the ubiquitination of proteins involved in cell cycle progression, signal transduction and transcription. In the SCF complex, serves as an adapter that links the F-box protein to CUL1. The functional specificity of the SCF complex depends on the F-box protein as substrate recognition component. Its association with the holoenzyme telomerase ribonucleoprotein complex suggests that it may play a role in turnover of holoenzyme telomerase complex components. This is S-phase kinase-associated protein 1 homolog from Tetrahymena thermophila (strain SB210).